The chain runs to 1428 residues: DNA-directed RNA polymerase subunit beta' (1428 aa).

Residues Cys66, Cys68, Cys81, and Cys84 each contribute to the Zn(2+) site. Mg(2+) is bound by residues Asp472, Asp474, and Asp476. Positions 816, 890, 897, and 900 each coordinate Zn(2+).

It belongs to the RNA polymerase beta' chain family. In terms of assembly, the RNAP catalytic core consists of 2 alpha, 1 beta, 1 beta' and 1 omega subunit. When a sigma factor is associated with the core the holoenzyme is formed, which can initiate transcription. Requires Mg(2+) as cofactor. The cofactor is Zn(2+).

It carries out the reaction RNA(n) + a ribonucleoside 5'-triphosphate = RNA(n+1) + diphosphate. Functionally, DNA-dependent RNA polymerase catalyzes the transcription of DNA into RNA using the four ribonucleoside triphosphates as substrates. This is DNA-directed RNA polymerase subunit beta' from Phocaeicola vulgatus (strain ATCC 8482 / DSM 1447 / JCM 5826 / CCUG 4940 / NBRC 14291 / NCTC 11154) (Bacteroides vulgatus).